Here is a 325-residue protein sequence, read N- to C-terminus: MRNYYIFSNGRIRRKENTIYIENEQGDRKAIPIEDVDTIHIFGEVDLNTKLLNFICQQGKTVHFYNYYGFYSGSLMPRERNVSGHIVVKQVEHFLDPERRFYLAYSFVEGAIFHMVRNLREYKNTDEFQEKIKKELSNAVETTKISELMGCEGRARDFYYEAFNTFLKSDFSMGKREKRPPRNPINALISFANSMIYTTVLNEIYHTQLNPTVSYLHEPSERRYSLSLDIAEIFKPLLADAIIFKLINNNMIKLDDFEEDVNYCYLNESGRKKFIREFDQKLSTTIKHRKLKRNVSYRTIIRIECYKLIKHFIGDEVYAPFKAWW.

Mn(2+) is bound by residues E152, H217, and E232.

The protein belongs to the CRISPR-associated endonuclease Cas1 family. Homodimer, forms a heterotetramer with a Cas2 homodimer. The cofactor is Mg(2+). Requires Mn(2+) as cofactor.

In terms of biological role, CRISPR (clustered regularly interspaced short palindromic repeat), is an adaptive immune system that provides protection against mobile genetic elements (viruses, transposable elements and conjugative plasmids). CRISPR clusters contain spacers, sequences complementary to antecedent mobile elements, and target invading nucleic acids. CRISPR clusters are transcribed and processed into CRISPR RNA (crRNA). Acts as a dsDNA endonuclease. Involved in the integration of spacer DNA into the CRISPR cassette. The sequence is that of CRISPR-associated endonuclease Cas1 3 from Thermodesulfovibrio yellowstonii (strain ATCC 51303 / DSM 11347 / YP87).